A 609-amino-acid polypeptide reads, in one-letter code: Adenine deaminase (609 aa).

The protein belongs to the metallo-dependent hydrolases superfamily. Adenine deaminase family. Mn(2+) serves as cofactor.

It carries out the reaction adenine + H2O + H(+) = hypoxanthine + NH4(+). The protein is Adenine deaminase of Cenarchaeum symbiosum (strain A).